The sequence spans 312 residues: Probable N-glycosylase/DNA lyase (312 aa).

Positions 1-22 (MRIPVGDFDLEMTQRSGQTSQP) are disordered. The span at 13-22 (TQRSGQTSQP) shows a compositional bias: polar residues. Lys-235 is a catalytic residue.

Belongs to the type-1 OGG1 family.

It catalyses the reaction 2'-deoxyribonucleotide-(2'-deoxyribose 5'-phosphate)-2'-deoxyribonucleotide-DNA = a 3'-end 2'-deoxyribonucleotide-(2,3-dehydro-2,3-deoxyribose 5'-phosphate)-DNA + a 5'-end 5'-phospho-2'-deoxyribonucleoside-DNA + H(+). Functionally, DNA repair enzyme that incises DNA at 8-oxoG residues. Excises 7,8-dihydro-8-oxoguanine and 2,6-diamino-4-hydroxy-5-N-methylformamidopyrimidine (FAPY) from damaged DNA. Has a beta-lyase activity that nicks DNA 3' to the lesion. The sequence is that of Probable N-glycosylase/DNA lyase from Methanothermobacter thermautotrophicus (strain ATCC 29096 / DSM 1053 / JCM 10044 / NBRC 100330 / Delta H) (Methanobacterium thermoautotrophicum).